A 181-amino-acid polypeptide reads, in one-letter code: Protoporphyrinogen IX dehydrogenase [quinone] (181 aa).

The Flavodoxin-like domain maps to 3 to 172 (TLILFSTRDG…QVANFAREIA (170 aa)). Residues 9 to 13 (TRDGQ) and 84 to 152 (FYSV…ETDT) contribute to the FMN site.

Belongs to the HemG family. FMN is required as a cofactor.

Its subcellular location is the cell inner membrane. It catalyses the reaction protoporphyrinogen IX + 3 a menaquinone = protoporphyrin IX + 3 a menaquinol. The catalysed reaction is protoporphyrinogen IX + 3 a ubiquinone = protoporphyrin IX + 3 a ubiquinol. It carries out the reaction protoporphyrinogen IX + 3 a quinone = protoporphyrin IX + 3 a quinol. The protein operates within porphyrin-containing compound metabolism; protoporphyrin-IX biosynthesis; protoporphyrin-IX from protoporphyrinogen-IX: step 1/1. In terms of biological role, catalyzes the 6-electron oxidation of protoporphyrinogen IX to form protoporphyrin IX; under anaerobic conditions uses menaquinone as an electron acceptor, under aerobic condition uses ubiquinone as an electron acceptor. The chain is Protoporphyrinogen IX dehydrogenase [quinone] from Escherichia coli O157:H7.